The primary structure comprises 1096 residues: Constitutive coactivator of PPAR-gamma-like protein 2 (1096 aa).

Over residues 35–59 (QQQHLHRQLPPTAALAPGAPRAARG) the composition is skewed to low complexity. 3 disordered regions span residues 35–113 (QQQH…PPQL), 508–579 (NYLP…DGEP), and 971–1096 (SRSS…RKED). At R58 the chain carries Omega-N-methylarginine. A compositionally biased stretch (basic residues) spans 82–95 (TRHHHPAHHFHHHG). The segment covering 101–113 (LHPPLPPPPPPQL) has biased composition (pro residues). Basic and acidic residues predominate over residues 540 to 559 (HITEAFHHQPEWGNPNRDRG). An Omega-N-methylarginine modification is found at R977. Composition is skewed to basic and acidic residues over residues 1041-1050 (IKEEKSDHRL) and 1076-1096 (NREK…RKED). A Glycyl lysine isopeptide (Lys-Gly) (interchain with G-Cter in SUMO2) cross-link involves residue K1042.

It belongs to the constitutive coactivator of PPAR-gamma family. As to expression, expressed at low levels in a number of tissues.

This is Constitutive coactivator of PPAR-gamma-like protein 2 (FAM120C) from Homo sapiens (Human).